A 172-amino-acid polypeptide reads, in one-letter code: RNA silencing suppressor p19 (172 aa).

The segment covering 1–15 (MERAIQGNDAREQAY) has biased composition (basic and acidic residues). The tract at residues 1 to 38 (MERAIQGNDAREQAYGERWNGGPGGSTSPFQLPDESPS) is disordered.

The protein belongs to the tombusvirus protein p19 family. In terms of assembly, homodimer.

Its function is as follows. Viral suppressor of RNA silencing which binds specifically to silencing RNAs (siRNAs). Acts as a molecular caliper to specifically select siRNAs based on the length of the duplex region of the RNA. The sequence is that of RNA silencing suppressor p19 from Tomato bushy stunt virus (strain A23) (TBSV).